The chain runs to 171 residues: Peptide deformylase (171 aa).

Residues cysteine 91 and histidine 133 each coordinate Fe cation. The active site involves glutamate 134. Histidine 137 contacts Fe cation.

The protein belongs to the polypeptide deformylase family. The cofactor is Fe(2+).

The catalysed reaction is N-terminal N-formyl-L-methionyl-[peptide] + H2O = N-terminal L-methionyl-[peptide] + formate. In terms of biological role, removes the formyl group from the N-terminal Met of newly synthesized proteins. Requires at least a dipeptide for an efficient rate of reaction. N-terminal L-methionine is a prerequisite for activity but the enzyme has broad specificity at other positions. The polypeptide is Peptide deformylase (Cronobacter sakazakii (strain ATCC BAA-894) (Enterobacter sakazakii)).